The chain runs to 655 residues: Mannosyl-oligosaccharide 1,2-alpha-mannosidase IA (655 aa).

Residues 1–43 (MPVGGLLPLFSSPGGGGLGSGLGGGLGGGRKGSGPAAFRLTEK) lie on the Cytoplasmic side of the membrane. The helical; Signal-anchor for type II membrane protein transmembrane segment at 44–64 (FVLLLVFSAFITLCFGAIFFL) threads the bilayer. Over 65-655 (PDSSKLLSGV…QKKEIDGKEK (591 aa)) the chain is Lumenal. Residues Cys-478 and Cys-510 are joined by a disulfide bond. Asn-515 is a glycosylation site (N-linked (GlcNAc...) asparagine). The Proton donor role is filled by Glu-524. Thr-635 is a binding site for Ca(2+).

Belongs to the glycosyl hydrolase 47 family. Ca(2+) is required as a cofactor. In terms of processing, N-linked glycan at Asn-515 consists of Man(6)-GlcNAc(2).

The protein localises to the golgi apparatus membrane. The enzyme catalyses N(4)-(alpha-D-Man-(1-&gt;2)-alpha-D-Man-(1-&gt;2)-alpha-D-Man-(1-&gt;3)-[alpha-D-Man-(1-&gt;2)-alpha-D-Man-(1-&gt;3)-[alpha-D-Man-(1-&gt;2)-alpha-D-Man-(1-&gt;6)]-alpha-D-Man-(1-&gt;6)]-beta-D-Man-(1-&gt;4)-beta-D-GlcNAc-(1-&gt;4)-beta-D-GlcNAc)-L-asparaginyl-[protein] (N-glucan mannose isomer 9A1,2,3B1,2,3) + 4 H2O = N(4)-(alpha-D-Man-(1-&gt;3)-[alpha-D-Man-(1-&gt;3)-[alpha-D-Man-(1-&gt;6)]-alpha-D-Man-(1-&gt;6)]-beta-D-Man-(1-&gt;4)-beta-D-GlcNAc-(1-&gt;4)-beta-D-GlcNAc)-L-asparaginyl-[protein] (N-glucan mannose isomer 5A1,2) + 4 beta-D-mannose. It catalyses the reaction N(4)-(alpha-D-Man-(1-&gt;2)-alpha-D-Man-(1-&gt;2)-alpha-D-Man-(1-&gt;3)-[alpha-D-Man-(1-&gt;3)-[alpha-D-Man-(1-&gt;2)-alpha-D-Man-(1-&gt;6)]-alpha-D-Man-(1-&gt;6)]-beta-D-Man-(1-&gt;4)-beta-D-GlcNAc-(1-&gt;4)-beta-D-GlcNAc)-L-asparaginyl-[protein] (N-glucan mannose isomer 8A1,2,3B1,3) + 3 H2O = N(4)-(alpha-D-Man-(1-&gt;3)-[alpha-D-Man-(1-&gt;3)-[alpha-D-Man-(1-&gt;6)]-alpha-D-Man-(1-&gt;6)]-beta-D-Man-(1-&gt;4)-beta-D-GlcNAc-(1-&gt;4)-beta-D-GlcNAc)-L-asparaginyl-[protein] (N-glucan mannose isomer 5A1,2) + 3 beta-D-mannose. Its pathway is protein modification; protein glycosylation. With respect to regulation, inhibited by both 1-deoxymannojirimycin and kifunensine. Its function is as follows. Involved in the maturation of Asn-linked oligosaccharides. Progressively trim alpha-1,2-linked mannose residues from Man(9)GlcNAc(2) to produce Man(5)GlcNAc(2). In Mus musculus (Mouse), this protein is Mannosyl-oligosaccharide 1,2-alpha-mannosidase IA (Man1a1).